The following is a 133-amino-acid chain: Snaclec botrocetin subunit alpha (133 aa).

Disulfide bonds link Cys2-Cys13, Cys30-Cys128, and Cys103-Cys120. Residues 9–129 (YEGNCYKFFQ…CAQKNPFVCK (121 aa)) enclose the C-type lectin domain.

It belongs to the snaclec family. As to quaternary structure, heterodimer of subunits alpha and beta; disulfide-linked. Botrocetin and vWF form a soluble complex. As to expression, expressed by the venom gland.

Its subcellular location is the secreted. In terms of biological role, snaclec that binds to von Willebrand factor (VWF) and induces its interaction with GPIbalpha (GP1BA) (via the vWF A1 domain), resulting in platelet aggregation. This Bothrops jararaca (Jararaca) protein is Snaclec botrocetin subunit alpha.